The primary structure comprises 286 residues: uncharacterized protein (286 aa).

His183 acts as the Proton donor in catalysis. The Nucleophile role is filled by Cys277.

Belongs to the DDAH family.

This is an uncharacterized protein from Bacillus subtilis (strain 168).